The primary structure comprises 172 residues: Shikimate kinase (172 aa).

Residue 14 to 19 coordinates ATP; sequence GAGKST. Ser-18 is a binding site for Mg(2+). Asp-36, Arg-60, and Gly-82 together coordinate substrate. Residue Arg-120 participates in ATP binding. Arg-139 contacts substrate. Gln-156 lines the ATP pocket.

The protein belongs to the shikimate kinase family. As to quaternary structure, monomer. It depends on Mg(2+) as a cofactor.

The protein localises to the cytoplasm. The catalysed reaction is shikimate + ATP = 3-phosphoshikimate + ADP + H(+). It functions in the pathway metabolic intermediate biosynthesis; chorismate biosynthesis; chorismate from D-erythrose 4-phosphate and phosphoenolpyruvate: step 5/7. Its function is as follows. Catalyzes the specific phosphorylation of the 3-hydroxyl group of shikimic acid using ATP as a cosubstrate. The polypeptide is Shikimate kinase (Aliivibrio salmonicida (strain LFI1238) (Vibrio salmonicida (strain LFI1238))).